Here is a 139-residue protein sequence, read N- to C-terminus: Aspartate 1-decarboxylase (139 aa).

Ser25 (schiff-base intermediate with substrate; via pyruvic acid) is an active-site residue. Residue Ser25 is modified to Pyruvic acid (Ser). Thr57 is a substrate binding site. Catalysis depends on Tyr58, which acts as the Proton donor. 73–75 (GAA) contributes to the substrate binding site. A disordered region spans residues 117–139 (TGSDPADAPAGSGLLRGDRPAGR).

This sequence belongs to the PanD family. Heterooctamer of four alpha and four beta subunits. Pyruvate is required as a cofactor. Post-translationally, is synthesized initially as an inactive proenzyme, which is activated by self-cleavage at a specific serine bond to produce a beta-subunit with a hydroxyl group at its C-terminus and an alpha-subunit with a pyruvoyl group at its N-terminus.

It localises to the cytoplasm. The enzyme catalyses L-aspartate + H(+) = beta-alanine + CO2. The protein operates within cofactor biosynthesis; (R)-pantothenate biosynthesis; beta-alanine from L-aspartate: step 1/1. Catalyzes the pyruvoyl-dependent decarboxylation of aspartate to produce beta-alanine. The sequence is that of Aspartate 1-decarboxylase from Nocardioides sp. (strain ATCC BAA-499 / JS614).